Here is a 513-residue protein sequence, read N- to C-terminus: uncharacterized protein (513 aa).

The tract at residues methionine 1 to lysine 48 is disordered. Residues glycine 37 to lysine 48 are compositionally biased toward polar residues. Phosphoserine is present on residues serine 43, serine 84, and serine 123. 4 disordered regions span residues aspartate 210–alanine 229, threonine 236–serine 287, alanine 390–proline 414, and serine 453–cysteine 481.

This is an uncharacterized protein from Mus musculus (Mouse).